The following is a 732-amino-acid chain: Catalase-peroxidase (732 aa).

The tryptophyl-tyrosyl-methioninium (Trp-Tyr) (with M-246) cross-link spans 97–220 (WHSAGTYRTS…LAAVQMGLIY (124 aa)). The active-site Proton acceptor is H98. The segment at residues 220–246 (YVNPEGPDGNPDPVAAGRDIRETFARM) is a cross-link (tryptophyl-tyrosyl-methioninium (Tyr-Met) (with W-97)). Residue H261 coordinates heme b.

The protein belongs to the peroxidase family. Peroxidase/catalase subfamily. In terms of assembly, homodimer or homotetramer. It depends on heme b as a cofactor. Post-translationally, formation of the three residue Trp-Tyr-Met cross-link is important for the catalase, but not the peroxidase activity of the enzyme.

It catalyses the reaction H2O2 + AH2 = A + 2 H2O. The catalysed reaction is 2 H2O2 = O2 + 2 H2O. Functionally, bifunctional enzyme with both catalase and broad-spectrum peroxidase activity. The protein is Catalase-peroxidase of Chlorobium phaeobacteroides (strain DSM 266 / SMG 266 / 2430).